The chain runs to 216 residues: Elongation factor Ts (216 aa).

The involved in Mg(2+) ion dislocation from EF-Tu stretch occupies residues 80 to 83 (TDFV).

The protein belongs to the EF-Ts family.

The protein resides in the cytoplasm. Its function is as follows. Associates with the EF-Tu.GDP complex and induces the exchange of GDP to GTP. It remains bound to the aminoacyl-tRNA.EF-Tu.GTP complex up to the GTP hydrolysis stage on the ribosome. In Alkaliphilus oremlandii (strain OhILAs) (Clostridium oremlandii (strain OhILAs)), this protein is Elongation factor Ts.